Consider the following 417-residue polypeptide: Tyrosine--tRNA ligase (417 aa).

L-tyrosine is bound at residue Tyr39. The 'HIGH' region signature appears at 44–53 (PTAPSLHAGG). Positions 176 and 180 each coordinate L-tyrosine. The 'KMSKS' region motif lies at 236 to 240 (KMGKS). Position 239 (Lys239) interacts with ATP. The S4 RNA-binding domain occupies 350-417 (IGVLALMVLA…KKRHVLIRPA (68 aa)).

The protein belongs to the class-I aminoacyl-tRNA synthetase family. TyrS type 1 subfamily. In terms of assembly, homodimer.

The protein resides in the cytoplasm. The catalysed reaction is tRNA(Tyr) + L-tyrosine + ATP = L-tyrosyl-tRNA(Tyr) + AMP + diphosphate + H(+). Functionally, catalyzes the attachment of tyrosine to tRNA(Tyr) in a two-step reaction: tyrosine is first activated by ATP to form Tyr-AMP and then transferred to the acceptor end of tRNA(Tyr). In Brucella abortus (strain 2308), this protein is Tyrosine--tRNA ligase.